The primary structure comprises 224 residues: uncharacterized protein (224 aa).

A run of 4 helical transmembrane segments spans residues 25–45 (ALAWLCDTVLLAILLAIIYGI), 56–76 (VFLIMTVSQAVLWLTYFVILP), 107–127 (ELFLWVWYSVIFLALAIYFFV), and 149–169 (IFVKILLSVISVLQLVFVVYF).

The protein resides in the cell membrane. This is an uncharacterized protein from Mycoplasma pneumoniae (strain ATCC 29342 / M129 / Subtype 1) (Mycoplasmoides pneumoniae).